The following is a 1396-amino-acid chain: Sterol 3-beta-glucosyltransferase (1396 aa).

Positions 1–16 are enriched in basic and acidic residues; sequence MRPLLDEAKRRVDRRL. 3 disordered regions span residues 1–59, 82–193, and 206–233; these read MRPL…TKEG, HARF…AAPV, and SKGS…TSAS. The segment covering 18–28 has biased composition (polar residues); sequence ASRQSLSTSRI. 2 stretches are compositionally biased toward basic and acidic residues: residues 35-44 and 82-108; these read ERLKDDHDAQ and HARF…KESQ. Polar residues predominate over residues 156–175; that stretch reads GSSQRQGGAQTEPSTGNQMS. The GRAM 1 domain maps to 237–288; it reads LRLMEMFGFESPEKVLVEYACSLVQSMLLQGYMYVTEGHICFYAYLPRKSTV. A PH domain is found at 289–387; that stretch reads AIKSGYLYKR…WVKSLQKVIF (99 aa). Polar residues-rich tracts occupy residues 459–479 and 487–497; these read QAKN…QSRA and SLTSGLSQVLG. Disordered stretches follow at residues 459–531 and 576–635; these read QAKN…RDLS and FRRQ…VQQS. The segment covering 585-595 has biased composition (basic and acidic residues); the sequence is QFGRRHSDETA. In terms of domain architecture, GRAM 2 spans 719–785; that stretch reads DRFRAHFALP…KDVENVEKEK (67 aa). The tract at residues 841 to 880 is disordered; it reads EQDESEAAKAEHRMLQEARKDASGGLIPQTPSDESPEIHP. Basic and acidic residues predominate over residues 846–862; sequence EAAKAEHRMLQEARKDA. 10 residues coordinate UDP-alpha-D-glucose: Ser-907, Arg-908, Asp-910, Ala-1210, His-1212, His-1225, Gly-1229, Thr-1230, Asp-1249, and Gln-1250.

The protein belongs to the glycosyltransferase 28 family.

Its subcellular location is the cytoplasm. The protein localises to the preautophagosomal structure membrane. It catalyses the reaction a sterol + UDP-alpha-D-glucose = a sterol 3-beta-D-glucoside + UDP + H(+). The enzyme catalyses ergosterol + UDP-alpha-D-glucose = ergosteryl 3-beta-D-glucoside + UDP + H(+). Its function is as follows. Sterol glycosyltransferase responsible for the glycosylation of ergosterol to form ergosterol-glucoside. The sequence is that of Sterol 3-beta-glucosyltransferase from Aspergillus terreus (strain NIH 2624 / FGSC A1156).